The chain runs to 216 residues: ATP-dependent dethiobiotin synthetase BioD (216 aa).

12–17 (NVGKTF) contributes to the ATP binding site. A Mg(2+)-binding site is contributed by Thr16. The active site involves Lys36. Ser40 provides a ligand contact to substrate. Residues Asp53, 110–113 (EGAG), and 170–171 (NQ) contribute to the ATP site. Mg(2+)-binding residues include Asp53 and Glu110.

This sequence belongs to the dethiobiotin synthetase family. Homodimer. Mg(2+) is required as a cofactor.

The protein resides in the cytoplasm. It carries out the reaction (7R,8S)-7,8-diammoniononanoate + CO2 + ATP = (4R,5S)-dethiobiotin + ADP + phosphate + 3 H(+). Its pathway is cofactor biosynthesis; biotin biosynthesis; biotin from 7,8-diaminononanoate: step 1/2. Catalyzes a mechanistically unusual reaction, the ATP-dependent insertion of CO2 between the N7 and N8 nitrogen atoms of 7,8-diaminopelargonic acid (DAPA, also called 7,8-diammoniononanoate) to form a ureido ring. This Vesicomyosocius okutanii subsp. Calyptogena okutanii (strain HA) protein is ATP-dependent dethiobiotin synthetase BioD.